The chain runs to 196 residues: uncharacterized protein (196 aa).

This is an uncharacterized protein from Methanocaldococcus jannaschii (strain ATCC 43067 / DSM 2661 / JAL-1 / JCM 10045 / NBRC 100440) (Methanococcus jannaschii).